A 395-amino-acid polypeptide reads, in one-letter code: Carbamoyl phosphate synthase small chain (395 aa).

The segment at 1-192 is CPSase; the sequence is MTYNLHPAIL…LQYKTDKMYG (192 aa). L-glutamine-binding residues include Ser-50, Gly-244, and Gly-246. The Glutamine amidotransferase type-1 domain occupies 196-383; it reads KIILIDFGVK…INLIKHFKQY (188 aa). Cys-273 serves as the catalytic Nucleophile. L-glutamine-binding residues include Met-274, Gln-277, Asn-313, Gly-315, and Phe-316. Catalysis depends on residues His-356 and Glu-358.

The protein belongs to the CarA family. Composed of two chains; the small (or glutamine) chain promotes the hydrolysis of glutamine to ammonia, which is used by the large (or ammonia) chain to synthesize carbamoyl phosphate. Tetramer of heterodimers (alpha,beta)4.

Its subcellular location is the plastid. It localises to the chloroplast. The enzyme catalyses hydrogencarbonate + L-glutamine + 2 ATP + H2O = carbamoyl phosphate + L-glutamate + 2 ADP + phosphate + 2 H(+). It carries out the reaction L-glutamine + H2O = L-glutamate + NH4(+). Its pathway is amino-acid biosynthesis; L-arginine biosynthesis; carbamoyl phosphate from bicarbonate: step 1/1. It functions in the pathway pyrimidine metabolism; UMP biosynthesis via de novo pathway; (S)-dihydroorotate from bicarbonate: step 1/3. Functionally, small subunit of the glutamine-dependent carbamoyl phosphate synthetase (CPSase). CPSase catalyzes the formation of carbamoyl phosphate from the ammonia moiety of glutamine, carbonate, and phosphate donated by ATP, constituting the first step of 2 biosynthetic pathways, one leading to arginine and/or urea and the other to pyrimidine nucleotides. The small subunit (glutamine amidotransferase) binds and cleaves glutamine to supply the large subunit with the substrate ammonia. In Gracilaria tenuistipitata var. liui (Red alga), this protein is Carbamoyl phosphate synthase small chain.